A 423-amino-acid chain; its full sequence is Lipoyl synthase 1, mitochondrial (423 aa).

7 residues coordinate [4Fe-4S] cluster: C127, C132, C138, C159, C163, C166, and S375. The region spanning 142–364 (DEEEGTATAT…EEEAMAMGFL (223 aa)) is the Radical SAM core domain.

The protein belongs to the radical SAM superfamily. Lipoyl synthase family. [4Fe-4S] cluster is required as a cofactor.

It localises to the mitochondrion. It catalyses the reaction [[Fe-S] cluster scaffold protein carrying a second [4Fe-4S](2+) cluster] + N(6)-octanoyl-L-lysyl-[protein] + 2 oxidized [2Fe-2S]-[ferredoxin] + 2 S-adenosyl-L-methionine + 4 H(+) = [[Fe-S] cluster scaffold protein] + N(6)-[(R)-dihydrolipoyl]-L-lysyl-[protein] + 4 Fe(3+) + 2 hydrogen sulfide + 2 5'-deoxyadenosine + 2 L-methionine + 2 reduced [2Fe-2S]-[ferredoxin]. It functions in the pathway protein modification; protein lipoylation via endogenous pathway; protein N(6)-(lipoyl)lysine from octanoyl-[acyl-carrier-protein]: step 2/2. Its function is as follows. Catalyzes the radical-mediated insertion of two sulfur atoms into the C-6 and C-8 positions of the octanoyl moiety bound to the lipoyl domains of lipoate-dependent enzymes, thereby converting the octanoylated domains into lipoylated derivatives. The chain is Lipoyl synthase 1, mitochondrial from Trypanosoma cruzi (strain CL Brener).